Consider the following 469-residue polypeptide: Citrate synthase, mitochondrial (469 aa).

Residues 1-28 (MAFFRTVTKLRSRLGQPPSLRDSVRCLQ) constitute a mitochondrion transit peptide. Residues His-304, His-350, and Asp-405 contribute to the active site.

This sequence belongs to the citrate synthase family. Homodimer.

The protein localises to the mitochondrion matrix. The enzyme catalyses oxaloacetate + acetyl-CoA + H2O = citrate + CoA + H(+). It participates in carbohydrate metabolism; tricarboxylic acid cycle; isocitrate from oxaloacetate: step 1/2. The polypeptide is Citrate synthase, mitochondrial (MCSI) (Fragaria ananassa (Strawberry)).